A 307-amino-acid chain; its full sequence is Mitochondrial glycine transporter YMC1 (307 aa).

Solcar repeat units follow at residues 26 to 106, 121 to 204, and 218 to 305; these read VKDL…MKRF, PQYY…LIAN, and PAWK…AMRL. A run of 6 helical transmembrane segments spans residues 29 to 49, 83 to 103, 118 to 138, 183 to 203, 223 to 243, and 277 to 298; these read LLAG…FDTT, LTPL…NEAM, LSLP…SFLA, TILR…ALIA, CIFG…LDVI, and FFKG…TFAT.

Belongs to the mitochondrial carrier (TC 2.A.29) family.

It localises to the mitochondrion inner membrane. Functionally, secondary mitochondrial glycine transporter required for the biosynthesis of heme at high glycine concentrations. Imports the precursor glycine into the mitochondrial matrix, where it is condensed with succinyl-CoA to produce 5-aminolevulinate (ALA), the first step of heme biosynthesis. This Saccharomyces cerevisiae (strain ATCC 204508 / S288c) (Baker's yeast) protein is Mitochondrial glycine transporter YMC1.